Here is a 469-residue protein sequence, read N- to C-terminus: Transcription factor SOX-10 (469 aa).

Disordered stretches follow at residues 1 to 70 (MAEE…DDDK), 163 to 203 (LRMQ…QGGA), 215 to 278 (LDHR…DFGN), 357 to 378 (AQVKTETAGPQGPSHYSDQPST), and 436 to 469 (RPLYTAISDPSPSGPQSHSPTHWEQPVYTTLSRP). The span at 23–32 (LSPGSAPSLG) shows a compositional bias: low complexity. A Phosphoserine modification is found at Ser-24. The segment covering 33–44 (PDGGGGGGGGSG) has biased composition (gly residues). The interval 65-105 (EADDDKFPVCIREAVSQVLSGYDWTLVPMPVRVNGASKSKP) is dimerization (DIM). Positions 107–175 (VKRPMNAFMV…QHKKDHPDYK (69 aa)) form a DNA-binding region, HMG box. Basic and acidic residues-rich tracts occupy residues 163-176 (LRMQHKKDHPDYKY) and 257-274 (ADPKRDGRSMGEGGKPHI). Residues 231–313 (PEHPSGQSHG…LPPNGHPGHV (83 aa)) are transactivation domain (TAM). The tract at residues 356 to 469 (KAQVKTETAG…QPVYTTLSRP (114 aa)) is transactivation domain (TAC). The span at 443–469 (SDPSPSGPQSHSPTHWEQPVYTTLSRP) shows a compositional bias: polar residues.

Monomer. Interacts with ARMCX3 at the mitochondrial outer membrane surface. Interacts with PAX3.

It is found in the cytoplasm. The protein localises to the nucleus. It localises to the mitochondrion outer membrane. Functionally, transcription factor that plays a central role in developing and mature glia. Specifically activates expression of myelin genes, during oligodendrocyte (OL) maturation, such as DUSP15 and MYRF, thereby playing a central role in oligodendrocyte maturation and CNS myelination. Once induced, MYRF cooperates with SOX10 to implement the myelination program. Transcriptional activator of MITF, acting synergistically with PAX3. Transcriptional activator of MBP, via binding to the gene promoter. This Sus scrofa (Pig) protein is Transcription factor SOX-10 (SOX10).